The sequence spans 572 residues: Oxygen-dependent choline dehydrogenase (572 aa).

9 to 38 (DYVIIGGGSAGSVLGARLSEDKDKNVLVLE) is an FAD binding site. The Proton acceptor role is filled by His-477.

The protein belongs to the GMC oxidoreductase family. The cofactor is FAD.

The enzyme catalyses choline + A = betaine aldehyde + AH2. It carries out the reaction betaine aldehyde + NAD(+) + H2O = glycine betaine + NADH + 2 H(+). It participates in amine and polyamine biosynthesis; betaine biosynthesis via choline pathway; betaine aldehyde from choline (cytochrome c reductase route): step 1/1. Its function is as follows. Involved in the biosynthesis of the osmoprotectant glycine betaine. Catalyzes the oxidation of choline to betaine aldehyde and betaine aldehyde to glycine betaine at the same rate. The polypeptide is Oxygen-dependent choline dehydrogenase (Staphylococcus epidermidis (strain ATCC 35984 / DSM 28319 / BCRC 17069 / CCUG 31568 / BM 3577 / RP62A)).